We begin with the raw amino-acid sequence, 591 residues long: DEAD-box ATP-dependent RNA helicase 30 (591 aa).

Positions 1-109 (MSSYDRRFAD…GRGGSSKREL (109 aa)) are disordered. A compositionally biased stretch (gly residues) spans 72-103 (FSVGRGGGRGGYGQYGDRNGGGNWGGGGGRGG). The short motif at 165-193 (KMFQDANFPDNILEAIAKLGFTEPTPIQA) is the Q motif element. A Helicase ATP-binding domain is found at 196-371 (WPMALKGRDL…RQFLRDPYKA (176 aa)). 209–216 (AETGSGKT) serves as a coordination point for ATP. A DEAD box motif is present at residues 319–322 (DEAD). Residues 399-544 (RLLTLLKQLM…VVPPTLSALV (146 aa)) enclose the Helicase C-terminal domain. The interval 547–591 (SGSGYGGSGGGRNFRPRGGGRGGGFGDKRSRSTSNFVPHGGKRTW) is disordered. Gly residues predominate over residues 549 to 571 (SGYGGSGGGRNFRPRGGGRGGGF).

Belongs to the DEAD box helicase family. DDX5/DBP2 subfamily.

The protein resides in the nucleus. The catalysed reaction is ATP + H2O = ADP + phosphate + H(+). ATP-dependent RNA helicase involved nonsense-mediated mRNA decay and ribosome biogenesis through rRNA processing. This is DEAD-box ATP-dependent RNA helicase 30 (RH30) from Arabidopsis thaliana (Mouse-ear cress).